Consider the following 264-residue polypeptide: tRNA (guanine-N(1)-)-methyltransferase (264 aa).

S-adenosyl-L-methionine-binding positions include Gly-125 and 145–150 (LGDFVL).

Belongs to the RNA methyltransferase TrmD family. As to quaternary structure, homodimer.

It localises to the cytoplasm. The enzyme catalyses guanosine(37) in tRNA + S-adenosyl-L-methionine = N(1)-methylguanosine(37) in tRNA + S-adenosyl-L-homocysteine + H(+). In terms of biological role, specifically methylates guanosine-37 in various tRNAs. This Burkholderia multivorans (strain ATCC 17616 / 249) protein is tRNA (guanine-N(1)-)-methyltransferase.